A 421-amino-acid polypeptide reads, in one-letter code: Atrochrysone carboxyl ACP thioesterase (421 aa).

Zn(2+) contacts are provided by histidine 207, histidine 209, aspartate 211, and histidine 212. Aspartate 211 (proton donor/acceptor) is an active-site residue.

The protein belongs to the metallo-beta-lactamase superfamily. Zn(2+) serves as cofactor. As to expression, specifically expressed in conidia.

It catalyses the reaction atrochrysone carboxyl-[ACP] + H2O = atrochrysone carboxylate + holo-[ACP] + H(+). It participates in secondary metabolite biosynthesis. Its function is as follows. Atrochrysone carboxyl ACP thioesterase; part of the gene cluster that mediates the biosynthesis of trypacidin, a mycotoxin with antiprotozoal activity and that plays a role in the infection process. The pathway begins with the synthesis of atrochrysone thioester by the polyketide synthase (PKS) tpcC. The atrochrysone carboxyl ACP thioesterase tpcB then breaks the thioester bond and releases the atrochrysone carboxylic acid from tpcC. The decarboxylase tpcK converts atrochrysone carboxylic acid to atrochrysone which is further reduced into emodin anthrone. The next step is performed by the emodin anthrone oxygenase tpcL that catalyzes the oxidation of emodin anthrone to emodin. Emodin O-methyltransferase encoded by tpcA catalyzes methylation of the 8-hydroxy group of emodin to form questin. Ring cleavage of questin by questin oxidase tpcI leads to desmethylsulochrin via several intermediates including questin epoxide. Another methylation step catalyzed by tpcM leads to the formation of sulochrin which is further converted to monomethylsulfochrin by tpcH. Finally, the tpcJ catalyzes the conversion of monomethylsulfochrin to trypacidin. Trypacidin is toxic for human pulmonary and bronchial epithelial cells by initiating the intracellular formation of nitric oxide (NO) and hydrogen peroxide (H(2)O(2)), thus triggering host necrotic cell death. The trypacidin pathway is also able to produce endocrocin via a distinct route from the endocrocin Enc pathway. The polypeptide is Atrochrysone carboxyl ACP thioesterase (Aspergillus fumigatus (strain ATCC MYA-4609 / CBS 101355 / FGSC A1100 / Af293) (Neosartorya fumigata)).